A 66-amino-acid chain; its full sequence is Toxin Boma6a (66 aa).

Residues 2-64 (RDAYIAQNYN…VPIKVEGKCH (63 aa)) form the LCN-type CS-alpha/beta domain. Intrachain disulfides connect Cys12-Cys63, Cys16-Cys36, Cys22-Cys46, and Cys26-Cys48.

It belongs to the long (4 C-C) scorpion toxin superfamily. Sodium channel inhibitor family. Alpha subfamily. In terms of tissue distribution, expressed by the venom gland.

The protein localises to the secreted. Functionally, alpha toxins bind voltage-independently at site-3 of sodium channels (Nav) and inhibit the inactivation of the activated channels, thereby blocking neuronal transmission. This is Toxin Boma6a from Buthus occitanus mardochei (Moroccan scorpion).